The following is a 251-amino-acid chain: Triosephosphate isomerase (251 aa).

Residue 9–11 coordinates substrate; sequence NWK. The Electrophile role is filled by His93. Residue Glu163 is the Proton acceptor of the active site. Residues Gly169, Ser209, and 230–231 contribute to the substrate site; that span reads GG.

This sequence belongs to the triosephosphate isomerase family. As to quaternary structure, homodimer.

It localises to the cytoplasm. The enzyme catalyses D-glyceraldehyde 3-phosphate = dihydroxyacetone phosphate. The protein operates within carbohydrate biosynthesis; gluconeogenesis. It functions in the pathway carbohydrate degradation; glycolysis; D-glyceraldehyde 3-phosphate from glycerone phosphate: step 1/1. In terms of biological role, involved in the gluconeogenesis. Catalyzes stereospecifically the conversion of dihydroxyacetone phosphate (DHAP) to D-glyceraldehyde-3-phosphate (G3P). The chain is Triosephosphate isomerase from Ruegeria pomeroyi (strain ATCC 700808 / DSM 15171 / DSS-3) (Silicibacter pomeroyi).